We begin with the raw amino-acid sequence, 101 residues long: Small ribosomal subunit protein uS14 (101 aa).

Belongs to the universal ribosomal protein uS14 family. In terms of assembly, part of the 30S ribosomal subunit. Contacts proteins S3 and S10.

Functionally, binds 16S rRNA, required for the assembly of 30S particles and may also be responsible for determining the conformation of the 16S rRNA at the A site. This Orientia tsutsugamushi (strain Ikeda) (Rickettsia tsutsugamushi) protein is Small ribosomal subunit protein uS14.